Consider the following 479-residue polypeptide: MSMDVGVVGLGVMGANLALNIAEKGFKVAVFNRTYSKSEEFMKANASAPFAGNLKAFETMEAFAASLKKPRKALILVQAGAATDSTTEQLKKVFEKGDILVDTGNAHFKDQGRRAQQLEAAGLRFLGMGISGGEEGARKGPAFFPGGTLSVWEEIRPIVEAAAAKADDGRPCVTMNGSGGAGSCVKMYHNSGEYAILQIWGEVFDILRAMGLNNDEVAAVLEDWKSKNFLKSYMLDISIAAARAKDKDGSYLTEHVMDRIGSKGTGLWSAQEALEIGVPAPSLNMAVVSRQFTMYKTERQANASNAPGITQSPGYTLKNKSPSGPEIKQLYDSVCIAIISCYAQMFQCLREMDKVHNFGLNLPATIATFRAGCILQGYLLKPMTEAFEKNPNISNLMCAFQTEIRAGLQNYRDMVALITSKLEVSIPVLSASLNYVTAMFTPTLKYGQLVSLQRDVFGRHGYERVDKDGRESFQWPELQ.

NADP(+) contacts are provided by residues 9 to 14, 32 to 34, 77 to 79, and asparagine 105; these read GLGVMG, NRT, and VQA. Substrate contacts are provided by residues asparagine 105 and 131–133; that span reads SGG. Lysine 186 (proton acceptor) is an active-site residue. 189-190 lines the substrate pocket; that stretch reads HN. The Proton donor role is filled by glutamate 193. Substrate-binding residues include tyrosine 194, lysine 263, arginine 290, arginine 454, and histidine 460.

The protein belongs to the 6-phosphogluconate dehydrogenase family. Homodimer.

The catalysed reaction is 6-phospho-D-gluconate + NADP(+) = D-ribulose 5-phosphate + CO2 + NADPH. The protein operates within carbohydrate degradation; pentose phosphate pathway; D-ribulose 5-phosphate from D-glucose 6-phosphate (oxidative stage): step 3/3. Catalyzes the oxidative decarboxylation of 6-phosphogluconate to ribulose 5-phosphate and CO(2), with concomitant reduction of NADP to NADPH. This Trypanosoma brucei brucei protein is 6-phosphogluconate dehydrogenase, decarboxylating (GND).